Consider the following 255-residue polypeptide: Acetylglutamate kinase (255 aa).

Residues 40 to 41 (GG), Arg-62, and Asn-153 each bind substrate.

It belongs to the acetylglutamate kinase family. ArgB subfamily.

Its subcellular location is the cytoplasm. The enzyme catalyses N-acetyl-L-glutamate + ATP = N-acetyl-L-glutamyl 5-phosphate + ADP. It functions in the pathway amino-acid biosynthesis; L-arginine biosynthesis; N(2)-acetyl-L-ornithine from L-glutamate: step 2/4. Its function is as follows. Catalyzes the ATP-dependent phosphorylation of N-acetyl-L-glutamate. The sequence is that of Acetylglutamate kinase from Bacillus cereus (strain G9842).